Here is a 434-residue protein sequence, read N- to C-terminus: Ribosomal protein uS12 methylthiotransferase RimO (434 aa).

The region spanning 2–112 (AKIGFVSLGC…VLEAVQEVLP (111 aa)) is the MTTase N-terminal domain. [4Fe-4S] cluster contacts are provided by Cys11, Cys47, Cys76, Cys142, Cys146, and Cys149. The region spanning 128–365 (LTPRHYAYVK…LEVQARVSLR (238 aa)) is the Radical SAM core domain. The TRAM domain occupies 368 to 434 (QRFVGKTLEV…DTYDLHGVQA (67 aa)).

This sequence belongs to the methylthiotransferase family. RimO subfamily. [4Fe-4S] cluster is required as a cofactor.

It is found in the cytoplasm. It catalyses the reaction L-aspartate(89)-[ribosomal protein uS12]-hydrogen + (sulfur carrier)-SH + AH2 + 2 S-adenosyl-L-methionine = 3-methylsulfanyl-L-aspartate(89)-[ribosomal protein uS12]-hydrogen + (sulfur carrier)-H + 5'-deoxyadenosine + L-methionine + A + S-adenosyl-L-homocysteine + 2 H(+). Catalyzes the methylthiolation of an aspartic acid residue of ribosomal protein uS12. The protein is Ribosomal protein uS12 methylthiotransferase RimO of Thermus thermophilus (strain ATCC BAA-163 / DSM 7039 / HB27).